Reading from the N-terminus, the 157-residue chain is Transcription elongation factor GreA (157 aa).

Positions 17-37 form a coiled coil; that stretch reads ELERLLKLRPQISEAIAEARE.

The protein belongs to the GreA/GreB family.

In terms of biological role, necessary for efficient RNA polymerase transcription elongation past template-encoded arresting sites. The arresting sites in DNA have the property of trapping a certain fraction of elongating RNA polymerases that pass through, resulting in locked ternary complexes. Cleavage of the nascent transcript by cleavage factors such as GreA or GreB allows the resumption of elongation from the new 3'terminus. GreA releases sequences of 2 to 3 nucleotides. This Vibrio parahaemolyticus serotype O3:K6 (strain RIMD 2210633) protein is Transcription elongation factor GreA.